Here is a 60-residue protein sequence, read N- to C-terminus: LKCHKLVPPFWKTCPEGKNLCYKMYMVATPMLPVKRGCIDVCPKDSALVKYMCCNTDKCN.

Cystine bridges form between Cys3/Cys21, Cys14/Cys38, Cys42/Cys53, and Cys54/Cys59.

This sequence belongs to the three-finger toxin family. Short-chain subfamily. Type IA cytotoxin sub-subfamily. In terms of assembly, monomer in solution; Homodimer and oligomer in the presence of negatively charged lipids forming a pore with a size ranging between 20 and 30 Angstroms. As to expression, expressed by the venom gland.

It is found in the secreted. It localises to the target cell membrane. Functionally, shows cytolytic activity on many different cells by forming pore in lipid membranes. In vivo, increases heart rate or kills the animal by cardiac arrest. In addition, it binds to heparin with high affinity, interacts with Kv channel-interacting protein 1 (KCNIP1) in a calcium-independent manner, and binds to integrin alpha-V/beta-3 (ITGAV/ITGB3) with moderate affinity. The protein is Cytotoxin 2 of Naja annulifera (Banded Egyptian cobra).